Here is a 56-residue protein sequence, read N- to C-terminus: MERAFQNRCEPRAAKPFKILKKRSTTSVASYQVSPHTARIFKENERLIDEYKRKKA.

It belongs to the SpoIISB antitoxin family. The isolated protein is unfolded; X-ray data suggests the inactive complex forms a heterotetramer of SpoIISA(2)-SpoIISB(2), which inactivates the toxic activity of SpoIISA.

Its function is as follows. Antitoxin component of a type II toxin-antitoxin (TA) system. Antitoxin that binds cognate toxin SpoIISA and neutralizes its toxic activity; unlike most antitoxins it does not seem to be highly labile upon expression in E.coli. This Bacillus subtilis (strain 168) protein is Stage II sporulation protein SB (spoIISB).